The sequence spans 414 residues: tRNA(Ile)-lysidine synthase (414 aa).

An ATP-binding site is contributed by 13–18; that stretch reads SGGIDS.

It belongs to the tRNA(Ile)-lysidine synthase family.

It localises to the cytoplasm. The catalysed reaction is cytidine(34) in tRNA(Ile2) + L-lysine + ATP = lysidine(34) in tRNA(Ile2) + AMP + diphosphate + H(+). In terms of biological role, ligates lysine onto the cytidine present at position 34 of the AUA codon-specific tRNA(Ile) that contains the anticodon CAU, in an ATP-dependent manner. Cytidine is converted to lysidine, thus changing the amino acid specificity of the tRNA from methionine to isoleucine. This is tRNA(Ile)-lysidine synthase from Thermotoga sp. (strain RQ2).